A 261-amino-acid chain; its full sequence is Na(+)-translocating NADH-quinone reductase subunit C (261 aa).

The chain crosses the membrane as a helical span at residues 11–31 (LLVALVVCLVSSVFVAGAAVA). FMN phosphoryl threonine is present on Thr230.

The protein belongs to the NqrC family. As to quaternary structure, composed of six subunits; NqrA, NqrB, NqrC, NqrD, NqrE and NqrF. FMN is required as a cofactor.

It is found in the cell inner membrane. The enzyme catalyses a ubiquinone + n Na(+)(in) + NADH + H(+) = a ubiquinol + n Na(+)(out) + NAD(+). In terms of biological role, NQR complex catalyzes the reduction of ubiquinone-1 to ubiquinol by two successive reactions, coupled with the transport of Na(+) ions from the cytoplasm to the periplasm. NqrA to NqrE are probably involved in the second step, the conversion of ubisemiquinone to ubiquinol. In Pseudomonas aeruginosa (strain ATCC 15692 / DSM 22644 / CIP 104116 / JCM 14847 / LMG 12228 / 1C / PRS 101 / PAO1), this protein is Na(+)-translocating NADH-quinone reductase subunit C.